A 170-amino-acid polypeptide reads, in one-letter code: Plastocyanin, chloroplastic (170 aa).

The transit peptide at 1–71 (MATVTSAAVA…SAMLASNAMA (71 aa)) directs the protein to the chloroplast. Residues 72 to 170 (LEVLLGGDDG…AGMVGKVTVN (99 aa)) form the Plastocyanin-like domain. Cu cation is bound by residues His108, Cys155, His158, and Met163.

This sequence belongs to the plastocyanin family. The cofactor is Cu(2+).

It localises to the plastid. Its subcellular location is the chloroplast thylakoid membrane. Functionally, participates in electron transfer between P700 and the cytochrome b6-f complex in photosystem I. This chain is Plastocyanin, chloroplastic (PETE), found in Solanum lycopersicum (Tomato).